Reading from the N-terminus, the 505-residue chain is Cell division control protein 6 homolog B (505 aa).

The disordered stretch occupies residues Lys37–Ser72. The segment covering Ala45–Thr54 has biased composition (polar residues).

It belongs to the CDC6/cdc18 family.

It is found in the nucleus. Functionally, may be involved in the initiation of DNA replication. This chain is Cell division control protein 6 homolog B, found in Arabidopsis thaliana (Mouse-ear cress).